We begin with the raw amino-acid sequence, 421 residues long: MASFPPRVNEKEIVRLRTIGELLAPAAPFDKKCGRENWTVAFAPDGSYFAWSQGHRTVKLVPWSQCLQNFLLHGTKNVTNSSSLRLPRQNSDGGQKNKPREHIIDCGDIVWSLAFGSSVPEKQSRCVNIEWHRFRFGQDQLLLATGLNNGRIKIWDVYTGKLLLNLVDHTEVVRDLTFAPDGSLILVSASRDKTLRVWDLKDDGNMMKVLRGHQNWVYSCAFSPDSSMLCSVGASKAVFLWNMDKYTMIRKLEGHHHDVVACDFSPDGALLATASYDTRVYIWDPHNGDILMEFGHLFPPPTPIFAGGANDRWVRSVSFSHDGLHVASLADDKMVRFWRIDEDYPVQVAPLSNGLCCAFSTDGSVLAAGTHDGSVYFWATPRQVPSLQHLCRMSIRRVMPTQEVQELPIPSKLLEFLSYRI.

WD repeat units follow at residues Lys-32–Leu-71, Ser-124–Asn-165, Asp-168–Lys-208, Gly-212–Lys-251, Gly-254–Glu-293, and Ala-309–Val-346. Residues Asp-372–Ile-421 form the SOCS box domain.

Interacts with DIO2. Component of the probable ECS(WSB1) E3 ubiquitin ligase complex which contains CUL5, RNF7/RBX2, Elongin BC complex and WSB1. Component of a probable ECS-like E3 ubiquitin-protein ligase complex which contains CUL5, RBX1, Elongin BC complex and WSB1. Interacts with CUL5, RNF7, ELOB and ELOC. Binds to HIPK2 through WD40 repeats.

Its pathway is protein modification; protein ubiquitination. In terms of biological role, probable substrate-recognition component of a SCF-like ECS (Elongin-Cullin-SOCS-box protein) E3 ubiquitin ligase complex which mediates the ubiquitination and subsequent proteasomal degradation of target proteins. Recognizes type II iodothyronine deiodinase/DIO2. Confers constitutive instability to HIPK2 through proteasomal degradation. The sequence is that of WD repeat and SOCS box-containing protein 1 (WSB1) from Homo sapiens (Human).